The primary structure comprises 102 residues: ATP-dependent Clp protease adapter protein ClpS (102 aa).

Positions 1–18 (MSQFDHQHLSDTEEKQEL) are enriched in basic and acidic residues. The interval 1–21 (MSQFDHQHLSDTEEKQELKPP) is disordered.

It belongs to the ClpS family. Binds to the N-terminal domain of the chaperone ClpA.

Involved in the modulation of the specificity of the ClpAP-mediated ATP-dependent protein degradation. This is ATP-dependent Clp protease adapter protein ClpS from Idiomarina loihiensis (strain ATCC BAA-735 / DSM 15497 / L2-TR).